Reading from the N-terminus, the 454-residue chain is Pup--protein ligase (454 aa).

Glutamate 9 provides a ligand contact to Mg(2+). Position 53 (arginine 53) interacts with ATP. A Mg(2+)-binding site is contributed by tyrosine 55. Aspartate 57 functions as the Proton acceptor in the catalytic mechanism. Mg(2+) is bound at residue glutamate 63. Threonine 66 and tryptophan 420 together coordinate ATP.

Belongs to the Pup ligase/Pup deamidase family. Pup-conjugating enzyme subfamily.

The catalysed reaction is ATP + [prokaryotic ubiquitin-like protein]-L-glutamate + [protein]-L-lysine = ADP + phosphate + N(6)-([prokaryotic ubiquitin-like protein]-gamma-L-glutamyl)-[protein]-L-lysine.. Its pathway is protein degradation; proteasomal Pup-dependent pathway. It participates in protein modification; protein pupylation. Functionally, catalyzes the covalent attachment of the prokaryotic ubiquitin-like protein modifier Pup to the proteasomal substrate proteins, thereby targeting them for proteasomal degradation. This tagging system is termed pupylation. The ligation reaction involves the side-chain carboxylate of the C-terminal glutamate of Pup and the side-chain amino group of a substrate lysine. The polypeptide is Pup--protein ligase (Pseudarthrobacter chlorophenolicus (strain ATCC 700700 / DSM 12829 / CIP 107037 / JCM 12360 / KCTC 9906 / NCIMB 13794 / A6) (Arthrobacter chlorophenolicus)).